A 443-amino-acid chain; its full sequence is NADH-ubiquinone oxidoreductase chain 4 (443 aa).

15 consecutive transmembrane segments (helical) span residues 1–21, 27–47, 71–91, 93–113, 114–134, 148–168, 187–207, 217–237, 247–267, 279–299, 308–328, 335–355, 362–382, 385–405, and 423–443; these read MFIS…PEAH, VWSF…WWNF, GVAL…MMLL, TVAG…ALCV, LDLL…FLLI, IVLY…MIYS, VLGW…PVHL, PTAG…IGFL, FCVS…LFST, IVAY…FSQS, FLMI…GILY, FILY…LFFL, AFPL…IFAV, LLAY…FWAF, and EFHT…KPMA.

The protein belongs to the complex I subunit 4 family.

The protein resides in the mitochondrion membrane. It carries out the reaction a ubiquinone + NADH + 5 H(+)(in) = a ubiquinol + NAD(+) + 4 H(+)(out). Functionally, core subunit of the mitochondrial membrane respiratory chain NADH dehydrogenase (Complex I) that is believed to belong to the minimal assembly required for catalysis. Complex I functions in the transfer of electrons from NADH to the respiratory chain. The immediate electron acceptor for the enzyme is believed to be ubiquinone. The sequence is that of NADH-ubiquinone oxidoreductase chain 4 (ND4) from Chlamydomonas reinhardtii (Chlamydomonas smithii).